A 351-amino-acid polypeptide reads, in one-letter code: Nicotinate-nucleotide--dimethylbenzimidazole phosphoribosyltransferase (351 aa).

Catalysis depends on Glu317, which acts as the Proton acceptor.

This sequence belongs to the CobT family.

The catalysed reaction is 5,6-dimethylbenzimidazole + nicotinate beta-D-ribonucleotide = alpha-ribazole 5'-phosphate + nicotinate + H(+). The protein operates within nucleoside biosynthesis; alpha-ribazole biosynthesis; alpha-ribazole from 5,6-dimethylbenzimidazole: step 1/2. In terms of biological role, catalyzes the synthesis of alpha-ribazole-5'-phosphate from nicotinate mononucleotide (NAMN) and 5,6-dimethylbenzimidazole (DMB). This is Nicotinate-nucleotide--dimethylbenzimidazole phosphoribosyltransferase from Pseudomonas fluorescens (strain ATCC BAA-477 / NRRL B-23932 / Pf-5).